The sequence spans 1399 residues: DNA-directed RNA polymerase subunit beta' (1399 aa).

Zn(2+) contacts are provided by Cys70, Cys72, Cys85, and Cys88. Asp460, Asp462, and Asp464 together coordinate Mg(2+). Residues Cys814, Cys888, Cys895, and Cys898 each coordinate Zn(2+).

The protein belongs to the RNA polymerase beta' chain family. In terms of assembly, the RNAP catalytic core consists of 2 alpha, 1 beta, 1 beta' and 1 omega subunit. When a sigma factor is associated with the core the holoenzyme is formed, which can initiate transcription. Mg(2+) is required as a cofactor. The cofactor is Zn(2+).

The catalysed reaction is RNA(n) + a ribonucleoside 5'-triphosphate = RNA(n+1) + diphosphate. DNA-dependent RNA polymerase catalyzes the transcription of DNA into RNA using the four ribonucleoside triphosphates as substrates. The sequence is that of DNA-directed RNA polymerase subunit beta' from Pseudomonas fluorescens (strain ATCC BAA-477 / NRRL B-23932 / Pf-5).